The primary structure comprises 166 residues: Thioredoxin, mitochondrial (166 aa).

Residues 1–59 (MAQRLLLGRFLTSVISRKPPQGVWASLTSKTLQTPQYNAGGLTVMPSPARTVHTTRVCL) constitute a mitochondrion transit peptide. Positions 61–166 (TFNVQDGPDF…LEAFLKKLIG (106 aa)) constitute a Thioredoxin domain. Active-site nucleophile residues include cysteine 90 and cysteine 93. A disulfide bridge links cysteine 90 with cysteine 93. Lysine 152 is subject to N6-acetyllysine; alternate. At lysine 152 the chain carries N6-succinyllysine; alternate.

The protein belongs to the thioredoxin family. Monomer.

It is found in the mitochondrion. Functionally, important for the control of mitochondrial reactive oxygen species homeostasis, apoptosis regulation and cell viability. Is involved in various redox reactions including the reduction of protein disulfide bonds, through the reversible oxidation of its active center dithiol to a disulfide. The sequence is that of Thioredoxin, mitochondrial (Txn2) from Mus musculus (Mouse).